Here is a 272-residue protein sequence, read N- to C-terminus: 3-methyl-2-oxobutanoate hydroxymethyltransferase (272 aa).

The Mg(2+) site is built by Asp-50 and Asp-89. Residues 50 to 51 (DS), Asp-89, and Lys-119 each bind 3-methyl-2-oxobutanoate. Glu-121 serves as a coordination point for Mg(2+). Residue Glu-188 is the Proton acceptor of the active site.

This sequence belongs to the PanB family. Homodecamer; pentamer of dimers. Requires Mg(2+) as cofactor.

It localises to the cytoplasm. It catalyses the reaction 3-methyl-2-oxobutanoate + (6R)-5,10-methylene-5,6,7,8-tetrahydrofolate + H2O = 2-dehydropantoate + (6S)-5,6,7,8-tetrahydrofolate. Its pathway is cofactor biosynthesis; (R)-pantothenate biosynthesis; (R)-pantoate from 3-methyl-2-oxobutanoate: step 1/2. Its function is as follows. Catalyzes the reversible reaction in which hydroxymethyl group from 5,10-methylenetetrahydrofolate is transferred onto alpha-ketoisovalerate to form ketopantoate. The sequence is that of 3-methyl-2-oxobutanoate hydroxymethyltransferase from Methylobacterium radiotolerans (strain ATCC 27329 / DSM 1819 / JCM 2831 / NBRC 15690 / NCIMB 10815 / 0-1).